The sequence spans 230 residues: ATP synthase subunit a (230 aa).

5 helical membrane passes run 17 to 37 (LPIT…FIMA), 78 to 98 (IFPF…IGVI), 107 to 127 (DLSV…WFGI), 165 to 187 (LFGN…GFLV), and 198 to 218 (EAII…AGGI).

It belongs to the ATPase A chain family. In terms of assembly, F-type ATPases have 2 components, CF(1) - the catalytic core - and CF(0) - the membrane proton channel. CF(1) has five subunits: alpha(3), beta(3), gamma(1), delta(1), epsilon(1). CF(0) has three main subunits: a(1), b(2) and c(9-12). The alpha and beta chains form an alternating ring which encloses part of the gamma chain. CF(1) is attached to CF(0) by a central stalk formed by the gamma and epsilon chains, while a peripheral stalk is formed by the delta and b chains.

Its subcellular location is the cell inner membrane. Key component of the proton channel; it plays a direct role in the translocation of protons across the membrane. This Legionella pneumophila (strain Paris) protein is ATP synthase subunit a.